Here is a 167-residue protein sequence, read N- to C-terminus: Leptin (167 aa).

Positions 1-21 are cleaved as a signal peptide; it reads MLCGPLCRFLWLWPYLSYVEA. Cys-117 and Cys-167 are oxidised to a cystine.

It belongs to the leptin family.

Its subcellular location is the secreted. Key player in the regulation of energy balance and body weight control. Once released into the circulation, has central and peripheral effects by binding LEPR, found in many tissues, which results in the activation of several major signaling pathways. In the hypothalamus, acts as an appetite-regulating factor that induces a decrease in food intake and an increase in energy consumption by inducing anorexinogenic factors and suppressing orexigenic neuropeptides, also regulates bone mass and secretion of hypothalamo-pituitary-adrenal hormones. In the periphery, increases basal metabolism, influences reproductive function, regulates pancreatic beta-cell function and insulin secretion, is pro-angiogenic for endothelial cell and affects innate and adaptive immunity. In the arcuate nucleus of the hypothalamus, activates by depolarization POMC neurons inducing FOS and SOCS3 expression to release anorexigenic peptides and inhibits by hyperpolarization NPY neurons inducing SOCS3 with a consequent reduction on release of orexigenic peptides. In addition to its known satiety inducing effect, has a modulatory role in nutrient absorption. In the intestine, reduces glucose absorption by enterocytes by activating PKC and leading to a sequential activation of p38, PI3K and ERK signaling pathways which exerts an inhibitory effect on glucose absorption. Acts as a growth factor on certain tissues, through the activation of different signaling pathways increases expression of genes involved in cell cycle regulation such as CCND1, via JAK2-STAT3 pathway, or VEGFA, via MAPK1/3 and PI3K-AKT1 pathways. May also play an apoptotic role via JAK2-STAT3 pathway and up-regulation of BIRC5 expression. Pro-angiogenic, has mitogenic activity on vascular endothelial cells and plays a role in matrix remodeling by regulating the expression of matrix metalloproteinases (MMPs) and tissue inhibitors of metalloproteinases (TIMPs). In innate immunity, modulates the activity and function of neutrophils by increasing chemotaxis and the secretion of oxygen radicals. Increases phagocytosis by macrophages and enhances secretion of pro-inflammatory mediators. Increases cytotoxic ability of NK cells. Plays a pro-inflammatory role, in synergy with IL1B, by inducing NOS2 which promotes the production of IL6, IL8 and Prostaglandin E2, through a signaling pathway that involves JAK2, PI3K, MAP2K1/MEK1 and MAPK14/p38. In adaptive immunity, promotes the switch of memory T-cells towards T helper-1 cell immune responses. Increases CD4(+)CD25(-) T-cell proliferation and reduces autophagy during TCR (T-cell receptor) stimulation, through MTOR signaling pathway activation and BCL2 up-regulation. This is Leptin (LEP) from Felis catus (Cat).